The chain runs to 242 residues: High mobility group protein homolog (242 aa).

2 consecutive DNA-binding regions (HMG box) follow at residues Pro-54–Lys-122 and Lys-126–Glu-197.

The protein localises to the host nucleus. This chain is High mobility group protein homolog (EF1), found in Acheta domesticus (House cricket).